Reading from the N-terminus, the 635-residue chain is MAKKSAENGIYSVSGDEKKGPLIAPGPDGAPAKGDGPVGLGTPGGRLAVPPRETWTRQMDFIMSCVGFAVGLGNVWRFPYLCYKNGGGVFLIPYVLIALVGGIPIFFLEISLGQFMKAGSINVWNICPLFKGLGYASMVIVFYCNTYYIMVLAWGFYYLVKSFTTTLPWATCGHTWNTPDCVEIFRHEDCANASLANLTCDQLADRRSPVIEFWENKVLRLSGGLEVPGALNWEVTLCLLACWVLVYFCVWKGVKSTGKIVYFTATFPYVVLVVLLVRGVLLPGALDGIIYYLKPDWSKLGSPQVWIDAGTQIFFSYAIGLGALTALGSYNRFNNNCYKDAIILALINSGTSFFAGFVVFSILGFMAAEQGVHISKVAESGPGLAFIAYPRAVTLMPVAPLWAALFFFMLLLLGLDSQFVGVEGFITGLLDLLPASYYFRFQREISVALCCALCFVIDLSMVTDGGMYVFQLFDYYSASGTTLLWQAFWECVVVAWVYGADRFMDDIACMIGYRPCPWMKWCWSFFTPLVCMGIFIFNVVYYEPLVYNNTYVYPWWGEAMGWAFALSSMLCVPLHLLGCLLRAKGTMAERWQHLTQPIWGLHHLEYRAQDADVRGLTTLTPVSESSKVVVVESVM.

The segment at 1-28 (MAKKSAENGIYSVSGDEKKGPLIAPGPD) is disordered. The Cytoplasmic segment spans residues 1–60 (MAKKSAENGIYSVSGDEKKGPLIAPGPDGAPAKGDGPVGLGTPGGRLAVPPRETWTRQMD). Thr-42 is modified (phosphothreonine). Residues 61–81 (FIMSCVGFAVGLGNVWRFPYL) form a helical membrane-spanning segment. At 82-87 (CYKNGG) the chain is on the extracellular side. A helical transmembrane segment spans residues 88-108 (GVFLIPYVLIALVGGIPIFFL). Residues 109–138 (EISLGQFMKAGSINVWNICPLFKGLGYASM) lie on the Cytoplasmic side of the membrane. Residues 139–159 (VIVFYCNTYYIMVLAWGFYYL) traverse the membrane as a helical segment. The Extracellular segment spans residues 160-230 (VKSFTTTLPW…LSGGLEVPGA (71 aa)). Residues Asn-192 and Asn-197 are each glycosylated (N-linked (GlcNAc...) asparagine). The chain crosses the membrane as a helical span at residues 231 to 251 (LNWEVTLCLLACWVLVYFCVW). Residues 252-269 (KGVKSTGKIVYFTATFPY) are Cytoplasmic-facing. A helical membrane pass occupies residues 270-290 (VVLVVLLVRGVLLPGALDGII). Residues 291–304 (YYLKPDWSKLGSPQ) are Extracellular-facing. The chain crosses the membrane as a helical span at residues 305–325 (VWIDAGTQIFFSYAIGLGALT). The Cytoplasmic segment spans residues 326 to 341 (ALGSYNRFNNNCYKDA). Residues 342-362 (IILALINSGTSFFAGFVVFSI) form a helical membrane-spanning segment. Residues 363–394 (LGFMAAEQGVHISKVAESGPGLAFIAYPRAVT) lie on the Extracellular side of the membrane. A helical membrane pass occupies residues 395–415 (LMPVAPLWAALFFFMLLLLGL). Over 416-444 (DSQFVGVEGFITGLLDLLPASYYFRFQRE) the chain is Cytoplasmic. Residues 445–465 (ISVALCCALCFVIDLSMVTDG) traverse the membrane as a helical segment. Residues 466–479 (GMYVFQLFDYYSAS) are Extracellular-facing. A helical membrane pass occupies residues 480–500 (GTTLLWQAFWECVVVAWVYGA). Residues 501 to 520 (DRFMDDIACMIGYRPCPWMK) lie on the Cytoplasmic side of the membrane. The helical transmembrane segment at 521-541 (WCWSFFTPLVCMGIFIFNVVY) threads the bilayer. At 542 to 560 (YEPLVYNNTYVYPWWGEAM) the chain is on the extracellular side. Asn-548 carries N-linked (GlcNAc...) asparagine glycosylation. A helical membrane pass occupies residues 561-581 (GWAFALSSMLCVPLHLLGCLL). Residues 582–635 (RAKGTMAERWQHLTQPIWGLHHLEYRAQDADVRGLTTLTPVSESSKVVVVESVM) are Cytoplasmic-facing. Residues Thr-617 and Thr-620 each carry the phosphothreonine modification. The residue at position 623 (Ser-623) is a Phosphoserine.

The protein belongs to the sodium:neurotransmitter symporter (SNF) (TC 2.A.22) family. SLC6A8 subfamily. Post-translationally, glycosylated. Predominantly expressed in skeletal muscle and kidney. Also found in brain, heart, colon, testis and prostate.

Its subcellular location is the cell membrane. It is found in the apical cell membrane. It carries out the reaction creatine(out) + chloride(out) + 2 Na(+)(out) = creatine(in) + chloride(in) + 2 Na(+)(in). Functionally, creatine:sodium symporter which mediates the uptake of creatine. Plays an important role in supplying creatine to the brain via the blood-brain barrier. This chain is Sodium- and chloride-dependent creatine transporter 1 (SLC6A8), found in Homo sapiens (Human).